The primary structure comprises 602 residues: Proteasome-associated ATPase (602 aa).

The stretch at 13–89 (PDAAEVERLR…LREEVDRLGQ (77 aa)) forms a coiled coil. Position 289 to 294 (289 to 294 (GCGKTL)) interacts with ATP. The tract at residues 601–602 (YL) is docks into pockets in the proteasome alpha-ring.

The protein belongs to the AAA ATPase family. Homohexamer. Assembles into a hexameric ring structure that caps the 20S proteasome core. Strongly interacts with the prokaryotic ubiquitin-like protein Pup through a hydrophobic interface; the interacting region of ARC lies in its N-terminal coiled-coil domain. There is one Pup binding site per ARC hexamer ring. Upon ATP-binding, the C-terminus of ARC interacts with the alpha-rings of the proteasome core, possibly by binding to the intersubunit pockets.

It functions in the pathway protein degradation; proteasomal Pup-dependent pathway. ATPase which is responsible for recognizing, binding, unfolding and translocation of pupylated proteins into the bacterial 20S proteasome core particle. May be essential for opening the gate of the 20S proteasome via an interaction with its C-terminus, thereby allowing substrate entry and access to the site of proteolysis. Thus, the C-termini of the proteasomal ATPase may function like a 'key in a lock' to induce gate opening and therefore regulate proteolysis. The protein is Proteasome-associated ATPase of Mycobacteroides abscessus (strain ATCC 19977 / DSM 44196 / CCUG 20993 / CIP 104536 / JCM 13569 / NCTC 13031 / TMC 1543 / L948) (Mycobacterium abscessus).